Consider the following 551-residue polypeptide: ATP synthase subunit alpha (551 aa).

Glycine 174–threonine 181 contributes to the ATP binding site.

Belongs to the ATPase alpha/beta chains family. In terms of assembly, F-type ATPases have 2 components, CF(1) - the catalytic core - and CF(0) - the membrane proton channel. CF(1) has five subunits: alpha(3), beta(3), gamma(1), delta(1), epsilon(1). CF(0) has three main subunits: a(1), b(2) and c(9-12). The alpha and beta chains form an alternating ring which encloses part of the gamma chain. CF(1) is attached to CF(0) by a central stalk formed by the gamma and epsilon chains, while a peripheral stalk is formed by the delta and b chains.

It is found in the cell inner membrane. The catalysed reaction is ATP + H2O + 4 H(+)(in) = ADP + phosphate + 5 H(+)(out). Its function is as follows. Produces ATP from ADP in the presence of a proton gradient across the membrane. The alpha chain is a regulatory subunit. The chain is ATP synthase subunit alpha from Salinibacter ruber (strain DSM 13855 / M31).